Here is a 90-residue protein sequence, read N- to C-terminus: MASMKSLATAILVVLLLAALSREGRSQNCSAAIGELMTCGPYVLPGNNGAPSEQCCSALRAVNHGCLCETINIISSLPDHCSLPAVNCAA.

An N-terminal signal peptide occupies residues 1–26 (MASMKSLATAILVVLLLAALSREGRS). 4 disulfides stabilise this stretch: Cys-29/Cys-66, Cys-39/Cys-55, Cys-56/Cys-81, and Cys-68/Cys-88.

It belongs to the A9/FIL1 family.

It is found in the secreted. The polypeptide is Protein LIM1 (LIM1) (Lilium longiflorum (Trumpet lily)).